Here is a 280-residue protein sequence, read N- to C-terminus: Octanoyltransferase LIP2p2, chloroplastic (280 aa).

The N-terminal 34 residues, 1 to 34 (MVFSVATSSVTNPKLHHHHHLSDFNRNRVSTSLK), are a transit peptide targeting the chloroplast. Residues 81-270 (QECSDSLIIL…EFSEVFQLQM (190 aa)) enclose the BPL/LPL catalytic domain. Substrate contacts are provided by residues 123-130 (RGGEVTYH), 191-193 (AIG), and 204-206 (GLA). C222 serves as the catalytic Acyl-thioester intermediate.

This sequence belongs to the LipB family. In terms of tissue distribution, expressed in roots, leaves, cauline leaves, stems, siliques and flowers.

It is found in the plastid. It localises to the chloroplast. It carries out the reaction octanoyl-[ACP] + L-lysyl-[protein] = N(6)-octanoyl-L-lysyl-[protein] + holo-[ACP] + H(+). It functions in the pathway protein modification; protein lipoylation via endogenous pathway; protein N(6)-(lipoyl)lysine from octanoyl-[acyl-carrier-protein]: step 1/2. In terms of biological role, catalyzes the transfer of endogenously produced octanoic acid from octanoyl-acyl-carrier-protein onto the lipoyl domains of lipoate-dependent enzymes. Lipoyl-ACP can also act as a substrate although octanoyl-ACP is likely to be the physiological substrate. Together with LIP1P is essential for de novo plastidial protein lipoylation during seed development. Acts redundantly with LIP2P. The polypeptide is Octanoyltransferase LIP2p2, chloroplastic (Arabidopsis thaliana (Mouse-ear cress)).